Consider the following 335-residue polypeptide: Glycerol-3-phosphate dehydrogenase [NAD(P)+] (335 aa).

Residues Ser-10, Phe-11, Arg-31, and Lys-105 each coordinate NADPH. Sn-glycerol 3-phosphate is bound by residues Lys-105, Gly-136, and Ser-138. Residue Ala-140 coordinates NADPH. Lys-191, Asp-244, Ser-254, Arg-255, and Asn-256 together coordinate sn-glycerol 3-phosphate. The active-site Proton acceptor is the Lys-191. An NADPH-binding site is contributed by Arg-255. Residues Val-279 and Glu-281 each contribute to the NADPH site.

The protein belongs to the NAD-dependent glycerol-3-phosphate dehydrogenase family.

It is found in the cytoplasm. It carries out the reaction sn-glycerol 3-phosphate + NAD(+) = dihydroxyacetone phosphate + NADH + H(+). It catalyses the reaction sn-glycerol 3-phosphate + NADP(+) = dihydroxyacetone phosphate + NADPH + H(+). The protein operates within membrane lipid metabolism; glycerophospholipid metabolism. In terms of biological role, catalyzes the reduction of the glycolytic intermediate dihydroxyacetone phosphate (DHAP) to sn-glycerol 3-phosphate (G3P), the key precursor for phospholipid synthesis. This chain is Glycerol-3-phosphate dehydrogenase [NAD(P)+], found in Leptospira interrogans serogroup Icterohaemorrhagiae serovar Lai (strain 56601).